An 836-amino-acid chain; its full sequence is MAHRKLQQEVDRVFKKINEGLEIFNSYYERHESCTNNPSQKDKLESDLKREVKKLQRLREQIKSWQSSPDIKDKDSLLDYRRSVEIAMEKYKAVEKASKEKAYSNISLKKSETLDPQERERRDISEYLSQMIDELERQYDSLQVEIDKLLLLNKKKKTSSTTNDEKKEQYKRFQARYRWHQQQMELALRLLANEELDPQDVKNVQDDINYFVESNQDPDFVEDETIYDGLNLQSNEAIAHEVAQYFASQNAEDNNTSDANESLQDISKLSKKEQRKLEREAKKAAKLAAKNATGAAIPVAGPSSTPSPVIPVADASKETERSPSSSPIHNATKPEEAVKTSIKSPRSSADNLLPSLQKSPSSATPETPTNVHTHIHQTPNGITGATTLKPATLPAKPAGELKWAVAASQAVEKDRKVTSASSTISNTSTKTPTTAAATTTSSNANSRIGSALNTPKLSTSSLSLQPDNTGASSSAATAAAVLAAGAAAVHQNNQAFYRNMSSSHHPLVSLATNPKSEHEVATTVNQNGPENTTKKVMEQKEEESPEERNKLQVPTFGVFDDDFESDRDSETEPEEEEQPSTPKYLSLEQREAKTNEIKKEFVSDFETLLLPSGVQEFIMSSELYNSQIESKITYKRSRDMCEISRLVEVPQGVNPPSPLDAFRSTQQWDVMRCSLRDIIIGSERLKEDSSSIYAKILENFRTLEMFSLFYNYYFAITPLEREIAYKILNERDWKVSKDGTMWFLRQGEVKFFNEICEVGDYKIFKLDDWTVIDKINFRLDYSFLQPPVDTASEVRDVSVDNNNVNDQSNVTLEQQKQEISHGKQLLKQLKQGKISV.

Coiled-coil stretches lie at residues 36 to 68, 119 to 195, and 255 to 292; these read NNPS…WQSS, RERR…ANEE, and NTSD…AKNA. Polar residues predominate over residues 252 to 267; that stretch reads EDNNTSDANESLQDIS. Disordered regions lie at residues 252-284, 296-391, 410-471, and 513-532; these read EDNN…AKKA, AIPV…LKPA, AVEK…NTGA, and NPKS…PENT. The span at 268–283 shows a compositional bias: basic and acidic residues; it reads KLSKKEQRKLEREAKK. A phosphoserine mark is found at Ser-303, Ser-307, and Ser-322. Residues 341–386 show a composition bias toward polar residues; it reads SIKSPRSSADNLLPSLQKSPSSATPETPTNVHTHIHQTPNGITGAT. The segment covering 418–446 has biased composition (low complexity); it reads TSASSTISNTSTKTPTTAAATTTSSNANS. Ser-446 and Ser-450 each carry phosphoserine. 2 stretches are compositionally biased toward polar residues: residues 447 to 468 and 522 to 531; these read RIGS…QPDN and TTVNQNGPEN. Lys-535 participates in a covalent cross-link: Glycyl lysine isopeptide (Lys-Gly) (interchain with G-Cter in ubiquitin). The disordered stretch occupies residues 537–583; it reads MEQKEEESPEERNKLQVPTFGVFDDDFESDRDSETEPEEEEQPSTPK. A compositionally biased stretch (acidic residues) spans 559-578; it reads FDDDFESDRDSETEPEEEEQ. A phosphoserine mark is found at Ser-565 and Ser-569. The residue at position 571 (Thr-571) is a Phosphothreonine. Ser-657 is modified (phosphoserine). Positions 803–831 form a coiled coil; sequence NVNDQSNVTLEQQKQEISHGKQLLKQLKQ.

It belongs to the CNOT2/3/5 family. As to quaternary structure, forms a NOT protein complex that comprises NOT1, NOT2, NOT3, NOT4 and NOT5. Subunit of the 1.0 MDa CCR4-NOT core complex that contains CCR4, CAF1, NOT1, NOT2, NOT3, NOT4, NOT5, CAF40 and CAF130. The core complex probably is part of a less characterized 1.9 MDa CCR4-NOT complex.

It localises to the cytoplasm. The protein resides in the nucleus. In terms of biological role, acts as a component of the CCR4-NOT core complex, which in the nucleus seems to be a general transcription factor, and in the cytoplasm the major mRNA deadenylase involved in mRNA turnover. The NOT protein subcomplex negatively regulates the basal and activated transcription of many genes. Preferentially affects TC-type TATA element-dependent transcription. Could directly or indirectly inhibit component(s) of the general transcription machinery. In Saccharomyces cerevisiae (strain ATCC 204508 / S288c) (Baker's yeast), this protein is General negative regulator of transcription subunit 3 (NOT3).